A 258-amino-acid chain; its full sequence is Deoxyribose-phosphate aldolase (258 aa).

Catalysis depends on aspartate 102, which acts as the Proton donor/acceptor. Catalysis depends on lysine 165, which acts as the Schiff-base intermediate with acetaldehyde. The active-site Proton donor/acceptor is lysine 199.

It belongs to the DeoC/FbaB aldolase family. DeoC type 2 subfamily.

It localises to the cytoplasm. It catalyses the reaction 2-deoxy-D-ribose 5-phosphate = D-glyceraldehyde 3-phosphate + acetaldehyde. It participates in carbohydrate degradation; 2-deoxy-D-ribose 1-phosphate degradation; D-glyceraldehyde 3-phosphate and acetaldehyde from 2-deoxy-alpha-D-ribose 1-phosphate: step 2/2. Its function is as follows. Catalyzes a reversible aldol reaction between acetaldehyde and D-glyceraldehyde 3-phosphate to generate 2-deoxy-D-ribose 5-phosphate. The protein is Deoxyribose-phosphate aldolase of Aliivibrio fischeri (strain MJ11) (Vibrio fischeri).